Consider the following 357-residue polypeptide: Uroporphyrinogen decarboxylase (357 aa).

Substrate is bound by residues 30-34 (RQAGR), aspartate 79, tyrosine 154, serine 209, and histidine 336.

Belongs to the uroporphyrinogen decarboxylase family. Homodimer.

It localises to the cytoplasm. It catalyses the reaction uroporphyrinogen III + 4 H(+) = coproporphyrinogen III + 4 CO2. It participates in porphyrin-containing compound metabolism; protoporphyrin-IX biosynthesis; coproporphyrinogen-III from 5-aminolevulinate: step 4/4. In terms of biological role, catalyzes the decarboxylation of four acetate groups of uroporphyrinogen-III to yield coproporphyrinogen-III. The protein is Uroporphyrinogen decarboxylase of Mycobacterium bovis (strain ATCC BAA-935 / AF2122/97).